A 131-amino-acid chain; its full sequence is RxLR effector protein 62 (131 aa).

A signal peptide spans 1 to 19 (MRLDILLFTLSSSTSLALS). The RxLR-dEER motif lies at 49–60 (RHLREEPANEAR). N-linked (GlcNAc...) asparagine glycosylation is present at Asn61.

Belongs to the RxLR effector family.

It is found in the secreted. It localises to the host cell. Secreted effector that suppresses callose deposition, a hallmark of pathogen-associated molecular pattern (PAMP)-triggered immunity (PTI) and renders host plants more susceptible to bacterial infection. Reduces host plant responsiveness to salicylic acid (SA) in haustoriated cells into which host-translocated effectors are delivered. The chain is RxLR effector protein 62 from Hyaloperonospora arabidopsidis (strain Emoy2) (Downy mildew agent).